A 556-amino-acid polypeptide reads, in one-letter code: Glutamine--tRNA ligase (556 aa).

The short motif at 39 to 49 is the 'HIGH' region element; it reads PEPNGYLHIGH. Residues 40-42 and 46-52 contribute to the ATP site; these read EPN and HIGHAKS. L-glutamine is bound by residues aspartate 72 and tyrosine 217. Residues threonine 236 and 267–268 contribute to the ATP site; that span reads RL. The 'KMSKS' region motif lies at 274–278; the sequence is LTSKR.

Belongs to the class-I aminoacyl-tRNA synthetase family. In terms of assembly, monomer.

It localises to the cytoplasm. It carries out the reaction tRNA(Gln) + L-glutamine + ATP = L-glutaminyl-tRNA(Gln) + AMP + diphosphate. In Haemophilus ducreyi (strain 35000HP / ATCC 700724), this protein is Glutamine--tRNA ligase.